The primary structure comprises 332 residues: tRNA-dihydrouridine synthase B (332 aa).

FMN contacts are provided by residues 19-21 (PMA) and glutamine 73. Residue cysteine 103 is the Proton donor of the active site. FMN contacts are provided by residues lysine 142, 203-205 (NGD), and 227-228 (GR).

This sequence belongs to the Dus family. DusB subfamily. FMN serves as cofactor.

It carries out the reaction a 5,6-dihydrouridine in tRNA + NAD(+) = a uridine in tRNA + NADH + H(+). The enzyme catalyses a 5,6-dihydrouridine in tRNA + NADP(+) = a uridine in tRNA + NADPH + H(+). Catalyzes the synthesis of 5,6-dihydrouridine (D), a modified base found in the D-loop of most tRNAs, via the reduction of the C5-C6 double bond in target uridines. In Pseudomonas aeruginosa (strain ATCC 15692 / DSM 22644 / CIP 104116 / JCM 14847 / LMG 12228 / 1C / PRS 101 / PAO1), this protein is tRNA-dihydrouridine synthase B.